The chain runs to 253 residues: Triosephosphate isomerase, cytosolic (253 aa).

Substrate-binding residues include N10 and K12. H96 (electrophile) is an active-site residue. E166 acts as the Proton acceptor in catalysis.

The protein belongs to the triosephosphate isomerase family. Homodimer.

Its subcellular location is the cytoplasm. It catalyses the reaction D-glyceraldehyde 3-phosphate = dihydroxyacetone phosphate. It functions in the pathway carbohydrate biosynthesis; gluconeogenesis. It participates in carbohydrate degradation; glycolysis; D-glyceraldehyde 3-phosphate from glycerone phosphate: step 1/1. In Secale cereale (Rye), this protein is Triosephosphate isomerase, cytosolic.